Reading from the N-terminus, the 272-residue chain is Flt3 receptor-interacting lectin (272 aa).

An N-terminal signal peptide occupies residues 1 to 8; it reads MFPSKVKS. The alpha-D-mannopyranose site is built by aspartate 94 and glycine 112. Residues asparagine 125 and asparagine 131 are each glycosylated (N-linked (GlcNAc...) asparagine). Residues asparagine 152 and 237 to 238 contribute to the alpha-D-mannopyranose site; that span reads QD.

This sequence belongs to the leguminous lectin family. Dimer (alpha/beta)2. Tetramer (alpha/beta)4. Glycosylated at Asn-125 by either a paucimannose type N-glycan (alpha-4) or a single N-acetylglucosamine (alpha-3). Glycosylated at Asn-131 by a paucimannose type N-glycan (alpha-2, alpha-3 and alpha-4). In alpha-2, Asn-125 is deamidated to an Asp, possibly due to the action of intrinsic peptide N-glycosidase (PGNase).

Its subcellular location is the protein storage vacuole lumen. In terms of biological role, mannose-binding lectin. Accommodates most effectively a non-reducing terminal alpha-d-mannosyl unit. Strongly precipitates murine IgM but not IgG. This Lablab purpureus (Hyacinth bean) protein is Flt3 receptor-interacting lectin.